The following is a 514-amino-acid chain: Putative thymidine phosphorylase (514 aa).

It belongs to the thymidine/pyrimidine-nucleoside phosphorylase family. Type 2 subfamily.

The catalysed reaction is thymidine + phosphate = 2-deoxy-alpha-D-ribose 1-phosphate + thymine. This Rhodopseudomonas palustris (strain ATCC BAA-98 / CGA009) protein is Putative thymidine phosphorylase.